Consider the following 114-residue polypeptide: DNA-directed RNA polymerase subunit omega (114 aa).

This sequence belongs to the RNA polymerase subunit omega family. In terms of assembly, the RNAP catalytic core consists of 2 alpha, 1 beta, 1 beta' and 1 omega subunit. When a sigma factor is associated with the core the holoenzyme is formed, which can initiate transcription.

It catalyses the reaction RNA(n) + a ribonucleoside 5'-triphosphate = RNA(n+1) + diphosphate. Its function is as follows. Promotes RNA polymerase assembly. Latches the N- and C-terminal regions of the beta' subunit thereby facilitating its interaction with the beta and alpha subunits. In Erythrobacter litoralis (strain HTCC2594), this protein is DNA-directed RNA polymerase subunit omega.